The following is a 342-amino-acid chain: METVRSAPPGDGAAEALLKELERQVQDVVRASSWWERHGVDCAILALSLLALPAGFLCLRAHNILAFATGITILGVCHYTLTVKGSHLATHSALTESKRWSKILMIFFLEVCTAFSAEFAKFNHVNLHHVYTNVVGLGDSSTWKVPLLNRYVYMFLGPLLVPIITPLVALEHLRKEEPRTALRTLGFICLGLYSQYWLFMNVSGFKNPSSALACMLLTRSLLAHPYLHVNIFQHIGLPMFSPDKKPRRIHMMTLGVLNLPRQLVLDWAFGHSLISCHVEHHLFPWLSDHMCLKVKPLVSKFLHEKQLPYNEDSYLARFQLFLSRYEEFMVHVPPITELVGVQ.

The next 2 helical transmembrane spans lie at 39–59 and 63–83; these read GVDC…FLCL and NILA…TLTV. Residues 87–91 carry the Histidine box-1 motif; it reads HLATH. Residues 100–120 traverse the membrane as a helical segment; it reads WSKILMIFFLEVCTAFSAEFA. Positions 124–128 match the Histidine box-2 motif; sequence HVNLH. 2 helical membrane-spanning segments follow: residues 151–171 and 185–205; these read YVYM…VALE and LGFI…VSGF. The Histidine box-3 signature appears at 277–281; sequence HVEHH.

The protein belongs to the fatty acid desaturase type 1 family.

Its subcellular location is the membrane. It functions in the pathway lipid metabolism; fatty acid metabolism. The chain is Fatty acid desaturase 6 (Fads6) from Mus musculus (Mouse).